The chain runs to 198 residues: Transcriptional regulator GfcR (198 aa).

The protein belongs to the purine/pyrimidine phosphoribosyltransferase family. GfcR subfamily.

This is Transcriptional regulator GfcR from Thermoplasma acidophilum (strain ATCC 25905 / DSM 1728 / JCM 9062 / NBRC 15155 / AMRC-C165).